The chain runs to 241 residues: Probable septum site-determining protein MinC (241 aa).

The protein belongs to the MinC family. In terms of assembly, interacts with MinD and FtsZ.

Cell division inhibitor that blocks the formation of polar Z ring septums. Rapidly oscillates between the poles of the cell to destabilize FtsZ filaments that have formed before they mature into polar Z rings. Prevents FtsZ polymerization. This Rhizobium rhizogenes (strain K84 / ATCC BAA-868) (Agrobacterium radiobacter) protein is Probable septum site-determining protein MinC.